Reading from the N-terminus, the 255-residue chain is SLA class II histocompatibility antigen, DQ haplotype D alpha chain (255 aa).

The first 23 residues, 1 to 23 (MVPGRVLMWGALALTAVMSACGG), serve as a signal peptide directing secretion. Positions 24–120 (EDIAADHVAS…QVPEVTVFPK (97 aa)) are alpha-1. Over 24 to 217 (EDIAADHVAS…IPAPMSELTE (194 aa)) the chain is Extracellular. N-linked (GlcNAc...) asparagine glycans are attached at residues asparagine 104 and asparagine 144. The Ig-like C1-type domain occupies 113 to 205 (PEVTVFPKSP…LDKPLLKHWE (93 aa)). Residues 121-204 (SPVMLGQPNT…GLDKPLLKHW (84 aa)) are alpha-2. Cysteine 133 and cysteine 189 are oxidised to a cystine. The tract at residues 205 to 217 (EPEIPAPMSELTE) is connecting peptide. The helical transmembrane segment at 218–240 (TVVCALGLIVGLVGIVVGTVFII) threads the bilayer. Residues 241-255 (QGLRSGGPSRHQGSL) are Cytoplasmic-facing.

This sequence belongs to the MHC class II family.

It is found in the membrane. The protein is SLA class II histocompatibility antigen, DQ haplotype D alpha chain of Sus scrofa (Pig).